We begin with the raw amino-acid sequence, 124 residues long: Small ribosomal subunit protein uS12 (124 aa).

At aspartate 89 the chain carries 3-methylthioaspartic acid. The tract at residues 103-124 (DTAGVKDRRQSRSKYGAKSPKE) is disordered.

It belongs to the universal ribosomal protein uS12 family. Part of the 30S ribosomal subunit. Contacts proteins S8 and S17. May interact with IF1 in the 30S initiation complex.

With S4 and S5 plays an important role in translational accuracy. Its function is as follows. Interacts with and stabilizes bases of the 16S rRNA that are involved in tRNA selection in the A site and with the mRNA backbone. Located at the interface of the 30S and 50S subunits, it traverses the body of the 30S subunit contacting proteins on the other side and probably holding the rRNA structure together. The combined cluster of proteins S8, S12 and S17 appears to hold together the shoulder and platform of the 30S subunit. The polypeptide is Small ribosomal subunit protein uS12 (Prochlorococcus marinus (strain NATL1A)).